Here is a 738-residue protein sequence, read N- to C-terminus: Polyribonucleotide nucleotidyltransferase (738 aa).

Residues Asp487 and Asp493 each coordinate Mg(2+). Positions 554–613 constitute a KH domain; that stretch reads PKIVTMTINPDKIRDVIGPGGKMINSIIDQTGVKIDIEQDGTVFIASTDQEGIDLAMSMI. In terms of domain architecture, S1 motif spans 623–691; it reads GEVYDATVRR…DKGRVNASRK (69 aa). Residues 704–738 are disordered; that stretch reads EAYEAKRKAARESRPPRDSRPPRRDGDRRPPRSTN.

The protein belongs to the polyribonucleotide nucleotidyltransferase family. It depends on Mg(2+) as a cofactor.

It is found in the cytoplasm. The catalysed reaction is RNA(n+1) + phosphate = RNA(n) + a ribonucleoside 5'-diphosphate. Involved in mRNA degradation. Catalyzes the phosphorolysis of single-stranded polyribonucleotides processively in the 3'- to 5'-direction. This Exiguobacterium sp. (strain ATCC BAA-1283 / AT1b) protein is Polyribonucleotide nucleotidyltransferase.